The following is a 545-amino-acid chain: RNA-directed RNA polymerase beta chain (545 aa).

The RdRp catalytic domain occupies 243 to 373; it reads RLAQQGSVDG…PNLRKTFVSG (131 aa).

In terms of assembly, part of the viral RNA-dependent RNA polymerase complex, the other subunits are probably the host ribosomal protein S1, EF-Tu and EF-Ts.

The catalysed reaction is RNA(n) + a ribonucleoside 5'-triphosphate = RNA(n+1) + diphosphate. Its function is as follows. This is the catalytic subunit of the viral RNA-dependent RNA polymerase complex. This complex is involved in viral RNA replication that produces (+)-stranded genomes via a complementary, (-)-stranded intermediate. The protein is RNA-directed RNA polymerase beta chain of Escherichia coli (Bacteriophage MS2).